Here is a 419-residue protein sequence, read N- to C-terminus: UDP-N-acetylglucosamine 1-carboxyvinyltransferase (419 aa).

Phosphoenolpyruvate is bound at residue Lys22–Asn23. Arg91 lines the UDP-N-acetyl-alpha-D-glucosamine pocket. Residue Cys115 is the Proton donor of the active site. Cys115 is subject to 2-(S-cysteinyl)pyruvic acid O-phosphothioketal. UDP-N-acetyl-alpha-D-glucosamine-binding positions include Arg120–Leu124, Lys160–Val163, Asp305, and Ile327.

It belongs to the EPSP synthase family. MurA subfamily.

It localises to the cytoplasm. The enzyme catalyses phosphoenolpyruvate + UDP-N-acetyl-alpha-D-glucosamine = UDP-N-acetyl-3-O-(1-carboxyvinyl)-alpha-D-glucosamine + phosphate. It participates in cell wall biogenesis; peptidoglycan biosynthesis. Functionally, cell wall formation. Adds enolpyruvyl to UDP-N-acetylglucosamine. In Klebsiella pneumoniae subsp. pneumoniae (strain ATCC 700721 / MGH 78578), this protein is UDP-N-acetylglucosamine 1-carboxyvinyltransferase.